We begin with the raw amino-acid sequence, 296 residues long: Ribosomal RNA small subunit methyltransferase H (296 aa).

S-adenosyl-L-methionine-binding positions include 30–32, Asp49, Phe76, Asp97, and Gln104; that span reads GGH.

The protein belongs to the methyltransferase superfamily. RsmH family.

The protein resides in the cytoplasm. It carries out the reaction cytidine(1402) in 16S rRNA + S-adenosyl-L-methionine = N(4)-methylcytidine(1402) in 16S rRNA + S-adenosyl-L-homocysteine + H(+). Functionally, specifically methylates the N4 position of cytidine in position 1402 (C1402) of 16S rRNA. The polypeptide is Ribosomal RNA small subunit methyltransferase H (Mesomycoplasma hyopneumoniae (strain 7448) (Mycoplasma hyopneumoniae)).